The sequence spans 110 residues: Large ribosomal subunit protein uL22 (110 aa).

The protein belongs to the universal ribosomal protein uL22 family. Part of the 50S ribosomal subunit.

This protein binds specifically to 23S rRNA; its binding is stimulated by other ribosomal proteins, e.g. L4, L17, and L20. It is important during the early stages of 50S assembly. It makes multiple contacts with different domains of the 23S rRNA in the assembled 50S subunit and ribosome. Functionally, the globular domain of the protein is located near the polypeptide exit tunnel on the outside of the subunit, while an extended beta-hairpin is found that lines the wall of the exit tunnel in the center of the 70S ribosome. In Mycoplasma mobile (strain ATCC 43663 / 163K / NCTC 11711) (Mesomycoplasma mobile), this protein is Large ribosomal subunit protein uL22.